A 382-amino-acid polypeptide reads, in one-letter code: Galactokinase (382 aa).

Residue 34–37 (EHTD) participates in substrate binding. Position 124–130 (124–130 (GAGLSSS)) interacts with ATP. The Mg(2+) site is built by S130 and E162. The active-site Proton acceptor is the D174. Y223 is a substrate binding site.

It belongs to the GHMP kinase family. GalK subfamily.

Its subcellular location is the cytoplasm. The enzyme catalyses alpha-D-galactose + ATP = alpha-D-galactose 1-phosphate + ADP + H(+). It participates in carbohydrate metabolism; galactose metabolism. Catalyzes the transfer of the gamma-phosphate of ATP to D-galactose to form alpha-D-galactose-1-phosphate (Gal-1-P). The protein is Galactokinase of Salmonella gallinarum (strain 287/91 / NCTC 13346).